The primary structure comprises 136 residues: Histone H3 (136 aa).

The tract at residues 1-45 (MARTKQTARKSTGGKAPRKQLATKAARKSAPATGGVKKPHRYRPG) is disordered. K5 carries the N6,N6,N6-trimethyllysine; alternate modification. K5 is subject to N6,N6-dimethyllysine; alternate. N6-methyllysine; alternate is present on residues K5 and K10. An N6-acetyllysine; alternate modification is found at K10. S11 is subject to Phosphoserine. K15 bears the N6,N6-dimethyllysine; alternate mark. N6-methyllysine; alternate is present on residues K15, K19, K24, K28, and K37. K15, K19, K24, K28, and K37 each carry N6-acetyllysine; alternate. Residues K28 and K37 each carry the N6,N6,N6-trimethyllysine; alternate modification. N6,N6-dimethyllysine; alternate is present on residues K28 and K37. Residues K57 and K65 each carry the N6-acetyllysine modification. At K80 the chain carries N6,N6,N6-trimethyllysine; alternate. K80 carries the post-translational modification N6,N6-dimethyllysine; alternate. At K80 the chain carries N6-methyllysine; alternate.

The protein belongs to the histone H3 family. In terms of assembly, the nucleosome is a histone octamer containing two molecules each of H2A, H2B, H3 and H4 assembled in one H3-H4 heterotetramer and two H2A-H2B heterodimers. The octamer wraps approximately 147 bp of DNA. Phosphorylated to form H3S10ph. H3S10ph promotes subsequent H3K14ac formation and is required for transcriptional activation through TBP recruitment to the promoters. Post-translationally, mono-, di- and trimethylated by the COMPASS complex to form H3K4me1/2/3. H3K4me activates gene expression by regulating transcription elongation and plays a role in telomere length maintenance. H3K4me enrichment correlates with transcription levels, and occurs in a 5' to 3' gradient with H3K4me3 enrichment at the 5'-end of genes, shifting to H3K4me2 and then H3K4me1. Methylated by SET2 to form H3K36me. H3K36me represses gene expression. Methylated by DOT1 to form H3K79me. H3K79me is required for association of SIR proteins with telomeric regions and for telomeric silencing. The COMPASS-mediated formation of H3K4me2/3 and the DOT1-mediated formation of H3K79me require H2BK123ub1. In terms of processing, acetylation of histone H3 leads to transcriptional activation. H3K14ac formation by GCN5 is promoted by H3S10ph. H3K14ac can also be formed by ESA1. H3K56ac formation occurs predominantly in newly synthesized H3 molecules during G1, S and G2/M of the cell cycle and may be involved in DNA repair.

The protein resides in the nucleus. It localises to the chromosome. Its function is as follows. Core component of nucleosome. Nucleosomes wrap and compact DNA into chromatin, limiting DNA accessibility to the cellular machineries which require DNA as a template. Histones thereby play a central role in transcription regulation, DNA repair, DNA replication and chromosomal stability. DNA accessibility is regulated via a complex set of post-translational modifications of histones, also called histone code, and nucleosome remodeling. In Mortierella alpina (Oleaginous fungus), this protein is Histone H3 (H3.1).